We begin with the raw amino-acid sequence, 193 residues long: Dual-action ribosomal maturation protein DarP (193 aa).

Positions 1–10 are enriched in basic and acidic residues; that stretch reads MRGRDEDTGE. Disordered regions lie at residues 1–20 and 171–193; these read MRGRDEDTGEFRGASRSQQR and QEQGLESGDSGLEDGESALEDDE. Acidic residues predominate over residues 181-193; that stretch reads GLEDGESALEDDE.

This sequence belongs to the DarP family.

The protein localises to the cytoplasm. Member of a network of 50S ribosomal subunit biogenesis factors which assembles along the 30S-50S interface, preventing incorrect 23S rRNA structures from forming. Promotes peptidyl transferase center (PTC) maturation. In Xanthomonas oryzae pv. oryzae (strain MAFF 311018), this protein is Dual-action ribosomal maturation protein DarP.